A 424-amino-acid polypeptide reads, in one-letter code: Cysteate synthase (424 aa).

At Lys106 the chain carries N6-(pyridoxal phosphate)lysine. Residues Asn132 and Thr381 each coordinate pyridoxal 5'-phosphate.

It belongs to the threonine synthase family. Cysteate synthase subfamily. In terms of assembly, homotrimer. Requires pyridoxal 5'-phosphate as cofactor.

The catalysed reaction is O-phospho-L-serine + sulfite + H(+) = L-cysteate + phosphate. It functions in the pathway cofactor biosynthesis; coenzyme M biosynthesis. Functionally, specifically catalyzes the beta-elimination of phosphate from L-phosphoserine and the beta-addition of sulfite to the dehydroalanine intermediate to produce L-cysteate. This is Cysteate synthase from Methanoregula boonei (strain DSM 21154 / JCM 14090 / 6A8).